Here is a 244-residue protein sequence, read N- to C-terminus: Probable transcriptional regulatory protein XfasM23_0940 (244 aa).

This sequence belongs to the TACO1 family.

It is found in the cytoplasm. The protein is Probable transcriptional regulatory protein XfasM23_0940 of Xylella fastidiosa (strain M23).